A 208-amino-acid polypeptide reads, in one-letter code: Ribosomal RNA large subunit methyltransferase E (208 aa).

Positions 63, 65, 83, 99, and 124 each coordinate S-adenosyl-L-methionine. K164 acts as the Proton acceptor in catalysis.

It belongs to the class I-like SAM-binding methyltransferase superfamily. RNA methyltransferase RlmE family.

It localises to the cytoplasm. The catalysed reaction is uridine(2552) in 23S rRNA + S-adenosyl-L-methionine = 2'-O-methyluridine(2552) in 23S rRNA + S-adenosyl-L-homocysteine + H(+). Specifically methylates the uridine in position 2552 of 23S rRNA at the 2'-O position of the ribose in the fully assembled 50S ribosomal subunit. The protein is Ribosomal RNA large subunit methyltransferase E of Salmonella typhi.